Reading from the N-terminus, the 276-residue chain is MDRLHTSSADWPDHLATQVVRVRGGVLQAAGQSDHVAEETPVALEFNGISHATMLVTPTHLDDFALGFALTEGIVGGMADVRGVELETRCDGIVVQVEIATSCEVRLKERRRAMAGRTGCGLCGVETLPEVVRDVAPVADSDALPVHNVLRAMQSLRSRQTLHDATGATHAAGWADASGEVVLAREDVGRHNALDKLIGALARQGIAPLPGMAVVSSRASFEMVQKTASAGIPILAAVSAPTALAIRLARQTNVTLLGFVRNTDATIYSHPQRIAA.

C120 functions as the Cysteine persulfide intermediate in the catalytic mechanism.

The protein belongs to the FdhD family.

The protein localises to the cytoplasm. Its function is as follows. Required for formate dehydrogenase (FDH) activity. Acts as a sulfur carrier protein that transfers sulfur from IscS to the molybdenum cofactor prior to its insertion into FDH. This Bordetella bronchiseptica (strain ATCC BAA-588 / NCTC 13252 / RB50) (Alcaligenes bronchisepticus) protein is Sulfur carrier protein FdhD.